Reading from the N-terminus, the 616-residue chain is MPKYRSHTTTHGRNMAGARALWRATGMTDDDFGKPIIAVVNSFTQFVPGHVHLRDLGKLVAEQIVASGGVAKEFNTIAVDDGIAMGHGGMLYSLPSRELIADSVEYMVNAHCADAMVCISNCDKITPGMLMASLRLNIPVIFVSGGPMEAGKTKLSDKIIKLDLIDAMIQGANPNVSDEESAQIERSACPTCGSCSGMFTANSMNCLNEALGLALPGNGSLLATHADRKQLFLDAGKHIVALTKRYYEQDDVSALPRNIANKAAFENAMILDIAMGGSTNTVLHLLAAAQEGEIDFSMTDIDRLSRKVPHLCKVAPSTQKYHMEDVHRAGGVIGILGELDRAGLLNRDVSNVLGLNLTQTLEAYDVMLTQDEGVKQMYAAGPAGIRTTKAFSQDCRYPSLDTDREEGCIRTREHAYSQDGGLAVLYGNIAADGCIVKTAGVDKDSLTFRGPAKVFESQDEAVEAILGGKVVAGDVVVIRYEGPKGGPGMQEMLYPTTYLKSMGLGKSCALLTDGRFSGGTSGLSIGHVSPEAASGGLIGLVQDGDFINIDIPNRGIVLDVSEAELAARRETEEAHGDAAWSPKGRERQVSYALRAYAMLATSADKGAVRDKSKLGG.

Residue aspartate 81 participates in Mg(2+) binding. Cysteine 122 contacts [2Fe-2S] cluster. The Mg(2+) site is built by aspartate 123 and lysine 124. Lysine 124 carries the post-translational modification N6-carboxylysine. Cysteine 195 contacts [2Fe-2S] cluster. Glutamate 491 provides a ligand contact to Mg(2+). The active-site Proton acceptor is the serine 517.

It belongs to the IlvD/Edd family. As to quaternary structure, homodimer. It depends on [2Fe-2S] cluster as a cofactor. The cofactor is Mg(2+).

The catalysed reaction is (2R)-2,3-dihydroxy-3-methylbutanoate = 3-methyl-2-oxobutanoate + H2O. The enzyme catalyses (2R,3R)-2,3-dihydroxy-3-methylpentanoate = (S)-3-methyl-2-oxopentanoate + H2O. It functions in the pathway amino-acid biosynthesis; L-isoleucine biosynthesis; L-isoleucine from 2-oxobutanoate: step 3/4. Its pathway is amino-acid biosynthesis; L-valine biosynthesis; L-valine from pyruvate: step 3/4. Functions in the biosynthesis of branched-chain amino acids. Catalyzes the dehydration of (2R,3R)-2,3-dihydroxy-3-methylpentanoate (2,3-dihydroxy-3-methylvalerate) into 2-oxo-3-methylpentanoate (2-oxo-3-methylvalerate) and of (2R)-2,3-dihydroxy-3-methylbutanoate (2,3-dihydroxyisovalerate) into 2-oxo-3-methylbutanoate (2-oxoisovalerate), the penultimate precursor to L-isoleucine and L-valine, respectively. This is Dihydroxy-acid dehydratase from Yersinia pseudotuberculosis serotype O:1b (strain IP 31758).